Consider the following 507-residue polypeptide: E3 ubiquitin-protein ligase TRIM31 (507 aa).

The RING-type zinc-finger motif lies at 16–56; that stretch reads CPICMEILQDPVTIDCGHNFCLQCISQVGKTSEKIQCPLCK. The B box-type zinc finger occupies 89–130; the sequence is KEDSRCQRHKEKLHYFCEQDGAFLCVVCRDSKDHKSHNVTLI. Residues cysteine 94, histidine 97, cysteine 116, and histidine 122 each coordinate Zn(2+). Coiled-coil stretches lie at residues 176–241 and 269–298; these read EKLK…LQSS and EDLE…DMNA. In terms of domain architecture, B30.2/SPRY spans 315–507; the sequence is EKESWSLLQK…VACSHITLSP (193 aa).

This sequence belongs to the TRIM/RBCC family. May form oligomers. Interacts with isoform p52shc of SHC1. Auto-ubiquitinated (in vitro). In terms of tissue distribution, highly expressed in the gastrointestrinal tract, with high expression in the small intestine, moderate in the large intestine and weak in the stomach and esophagus.

It is found in the cytoplasm. Its subcellular location is the mitochondrion. The catalysed reaction is S-ubiquitinyl-[E2 ubiquitin-conjugating enzyme]-L-cysteine + [acceptor protein]-L-lysine = [E2 ubiquitin-conjugating enzyme]-L-cysteine + N(6)-ubiquitinyl-[acceptor protein]-L-lysine.. It participates in protein modification; protein ubiquitination. Its function is as follows. E3 ubiquitin-protein ligase that acts as a regulator of antiviral immune response and inflammation by mediating ubiquitination of substrates. Acts as a regulator of innate immune defense against viruses by mediating 'Lys-63'-linked ubiquitination of MAVS, promoting MAVS polymerization and formation of three-stranded helical filaments on mitochondria. Acts as a negative regulator of the NLRP3 inflammasome by catalyzing 'Lys-48'-linked ubiquitination of NLRP3, leading to its degradation. Regulator of Src-induced anchorage independent cell growth. The protein is E3 ubiquitin-protein ligase TRIM31 of Mus musculus (Mouse).